We begin with the raw amino-acid sequence, 89 residues long: uncharacterized protein (89 aa).

3 helical membrane-spanning segments follow: residues 5 to 27 (TLTEYCLLIFFTGFYLAVTGFTA), 32 to 51 (LYIGIALIYIFSHIFSKRLL), and 63 to 85 (LFFSVLAIIGSVFITVLCIALVA).

Its subcellular location is the cell membrane. This is an uncharacterized protein from Bacillus subtilis (strain 168).